Consider the following 80-residue polypeptide: Cell division activator CedA (80 aa).

This sequence belongs to the CedA family.

In terms of biological role, activates the cell division inhibited by chromosomal DNA over-replication. The protein is Cell division activator CedA of Salmonella arizonae (strain ATCC BAA-731 / CDC346-86 / RSK2980).